Consider the following 768-residue polypeptide: Cullin-3 (768 aa).

Serine 2 is subject to N-acetylserine. The segment at 2-41 (SNLSKGTGSRKDTKMRIRAFPMTMDEKYVNSIWDLLKNAI) is interaction with KLHL18. Serine 585 carries the phosphoserine modification. Residues 677–698 (VAAKQGESDPERKETRQKVDDD) are disordered. The span at 682–698 (GESDPERKETRQKVDDD) shows a compositional bias: basic and acidic residues. The region spanning 698 to 760 (DRKHEIEAAI…REYLARTPED (63 aa)) is the Cullin neddylation domain. Residue lysine 712 forms a Glycyl lysine isopeptide (Lys-Gly) (interchain with G-Cter in NEDD8) linkage.

The protein belongs to the cullin family. Forms neddylation-dependent homodimers. Component of multiple BCR (BTB-CUL3-RBX1) E3 ubiquitin-protein ligase complexes formed of CUL3, RBX1 and a variable BTB domain-containing protein acting as both, adapter to cullin and substrate recognition subunit. The BCR complex may be active as a heterodimeric complex, in which NEDD8, covalently attached to one CUL3 molecule, binds to the C-terminus of a second CUL3 molecule. Interacts with RBX1, RNF7 and TIP120A/CAND1. Part of the BCR(SPOP) containing SPOP, and of BCR containing homodimeric SPOPL or the heterodimer formed by SPOP and SPOPL. Part of the probable BCR(KLHL9-KLHL13) complex with BTB domain proteins KLHL9 and KLHL13. Part of the BCR(KLHL41) complex containing KLHL41. Component of the BCR(KLHL12) E3 ubiquitin ligase complex, at least composed of CUL3 and KLHL12 and RBX1. Component of the BCR(KLHL3) E3 ubiquitin ligase complex, at least composed of CUL3 and KLHL3 and RBX1. Part of the BCR(ENC1) complex containing ENC1. Part of a complex consisting of BMI1/PCGF4, CUL3 and SPOP. Part of a complex consisting of BRMS1, CUL3 and SPOP. Component of the BCR(KLHL21) E3 ubiquitin ligase complex, at least composed of CUL3, KLHL21 and RBX1. Component of the BCR(KLHL22) E3 ubiquitin ligase complex, at least composed of CUL3, KLHL22 and RBX1. Component of the BCR(KLHL25) E3 ubiquitin ligase complex, at least composed of CUL3, KLHL25 and RBX1. Part of a complex consisting of MACROH2A1, CUL3 and SPOP. Component of the BCR(KLHL42) E3 ubiquitin ligase complex, at least composed of CUL3 and KLHL42. Component of the BCR(KBTBD8) E3 ubiquitin ligase complex, at least composed of CUL3, KBTBD8 and RBX1. Interacts with KLHL42 (via the BTB domain). Interacts with KATNA1; the interaction is enhanced by KLHL42. Interacts with KCTD5, KLHL9, KLHL11, KLHL13, GAN, ZBTB16, KLHL3, KLHL15, KLHL20, KLHL36, GMCL2, BTBD1. Part of a complex that contains CUL3, RBX1 and GAN. Interacts (via BTB domain) with KLHL17; the interaction regulates surface GRIK2 expression. Interacts with KCTD7. Part of the BCR(GAN) complex containing GAN. Part of the BCR(KEAP1) complex containing KEAP1. Interacts with KAT5 and ATF2. Interacts with KCTD17 in the BCR(KCTD17) E3 ubiquitin ligase complex, at least composed of CUL3, KCTD17 and RBX1. Interacts (when neddylated) with ARIH1; leading to activate the E3 ligase activity of ARIH1. Interacts with COPS9. Interacts with PPP2R5B; this interaction is indirect and mediated through KLHL15-binding and leads to PPP2R5B proteasomal degradation. Interacts with RBBP8/CtIP; this interaction is indirect and mediated through KLHL15-binding and leads to RBBP8 proteasomal degradation. Interacts with KLHL24 in the BCR(KLHL24) E3 ubiquitin ligase complex, composed of CUL3, RBX1 and KLHL24. Interacts with RHOBTB2. Interacts with CYCE. Interacts with KLHL10. Interacts with AURKA and KLHL18 (via BTB domain). Interacts (unneddylated form) with DCUN1D1, DCUN1D2, DCUN1D3, DCUN1D4 and DCUN1D5; these interactions promote the cullin neddylation. Component of a BCR3 (BTB-CUL3-RBX1) E3 ubiquitin ligase complex, also named Cul3-RING ubiquitin ligase complex CUL3(KBTBD6/7), composed of CUL3, RBX1, KBTBD6 and KBTBD7. Component of the BCR(KBTBD2) E3 ubiquitin ligase complex, at least composed of CUL3, KBTBD2 and RBX1. Interacts with KBTBD2 (via the BTB domain). Component of the BCR(KBTBD4) E3 ubiquitin ligase complex, at least composed of CUL3, KBTBD4 and RBX1. In terms of processing, neddylated. Attachment of NEDD8 is required for the E3 ubiquitin-protein ligase activity of the BCR complex. Deneddylated via its interaction with the COP9 signalosome (CSN) complex. In terms of tissue distribution, widely expressed, with highest expression in brain, spleen and testis. In the testis, it is mainly expressed in spermatids.

It localises to the nucleus. Its subcellular location is the golgi apparatus. The protein localises to the cell projection. It is found in the cilium. The protein resides in the flagellum. It localises to the cytoplasm. Its subcellular location is the cytoskeleton. The protein localises to the spindle. It is found in the microtubule organizing center. The protein resides in the centrosome. It localises to the spindle pole. The protein operates within protein modification; protein ubiquitination. Functionally, core component of multiple cullin-RING-based BCR (BTB-CUL3-RBX1) E3 ubiquitin-protein ligase complexes which mediate the ubiquitination and subsequent proteasomal degradation of target proteins. BCR complexes and ARIH1 collaborate in tandem to mediate ubiquitination of target proteins. As a scaffold protein may contribute to catalysis through positioning of the substrate and the ubiquitin-conjugating enzyme. The E3 ubiquitin-protein ligase activity of the complex is dependent on the neddylation of the cullin subunit and is inhibited by the association of the deneddylated cullin subunit with TIP120A/CAND1. The functional specificity of the BCR complex depends on the BTB domain-containing protein as the substrate recognition component. BCR(KLHL42) is involved in ubiquitination of KATNA1. BCR(SPOP) is involved in ubiquitination of BMI1/PCGF4, BRMS1, MACROH2A1 and DAXX, GLI2 and GLI3. Can also form a cullin-RING-based BCR (BTB-CUL3-RBX1) E3 ubiquitin-protein ligase complex containing homodimeric SPOPL or the heterodimer formed by SPOP and SPOPL; these complexes have lower ubiquitin ligase activity. BCR(KLHL9-KLHL13) controls the dynamic behavior of AURKB on mitotic chromosomes and thereby coordinates faithful mitotic progression and completion of cytokinesis. BCR(KLHL12) is involved in ER-Golgi transport by regulating the size of COPII coats, thereby playing a key role in collagen export, which is required for embryonic stem (ES) cells division: BCR(KLHL12) acts by mediating monoubiquitination of SEC31 (SEC31A or SEC31B). BCR(KLHL3) acts as a regulator of ion transport in the distal nephron; by mediating ubiquitination of WNK4. The BCR(KLHL20) E3 ubiquitin ligase complex is involved in interferon response and anterograde Golgi to endosome transport: it mediates both ubiquitination leading to degradation and 'Lys-33'-linked ubiquitination. The BCR(KLHL21) E3 ubiquitin ligase complex regulates localization of the chromosomal passenger complex (CPC) from chromosomes to the spindle midzone in anaphase and mediates the ubiquitination of AURKB. The BCR(KLHL22) ubiquitin ligase complex mediates monoubiquitination of PLK1, leading to PLK1 dissociation from phosphoreceptor proteins and subsequent removal from kinetochores, allowing silencing of the spindle assembly checkpoint (SAC) and chromosome segregation. The BCR(KLHL22) ubiquitin ligase complex is also responsible for the amino acid-stimulated 'Lys-48' polyubiquitination and proteasomal degradation of DEPDC5. Through the degradation of DEPDC5, releases the GATOR1 complex-mediated inhibition of the TORC1 pathway. The BCR(KLHL25) ubiquitin ligase complex is involved in translational homeostasis by mediating ubiquitination and subsequent degradation of hypophosphorylated EIF4EBP1 (4E-BP1). The BCR(KLHL25) ubiquitin ligase complex is also involved in lipid synthesis by mediating ubiquitination and degradation of ACLY. The BCR(KBTBD8) complex acts by mediating monoubiquitination of NOLC1 and TCOF1, leading to remodel the translational program of differentiating cells in favor of neural crest specification. Involved in ubiquitination of cyclin E and of cyclin D1 (in vitro) thus involved in regulation of G1/S transition. Involved in the ubiquitination of KEAP1, ENC1 and KLHL41. In concert with ATF2 and RBX1, promotes degradation of KAT5 thereby attenuating its ability to acetylate and activate ATM. The BCR(KCTD17) E3 ubiquitin ligase complex mediates ubiquitination and degradation of TCHP, a down-regulator of cilium assembly, thereby inducing ciliogenesis. The BCR(KLHL24) E3 ubiquitin ligase complex mediates ubiquitination of KRT14, controls KRT14 levels during keratinocytes differentiation, and is essential for skin integrity. The BCR(KLHL18) E3 ubiquitin ligase complex mediates the ubiquitination of AURKA leading to its activation at the centrosome which is required for initiating mitotic entry. The BCR(KEAP1) E3 ubiquitin ligase complex acts as a key sensor of oxidative and electrophilic stress by mediating ubiquitination and degradation of NFE2L2/NRF2, a transcription factor regulating expression of many cytoprotective genes. As part of the CUL3(KBTBD6/7) E3 ubiquitin ligase complex functions mediates 'Lys-48' ubiquitination and proteasomal degradation of TIAM1. By controlling the ubiquitination of that RAC1 guanine exchange factors (GEF), regulates RAC1 signal transduction and downstream biological processes including the organization of the cytoskeleton, cell migration and cell proliferation. The BCR(KBTBD4) E3 ubiquitin ligase complex targets CoREST corepressor complex components RCOR1, KDM1A/LSD1 and HDAC2 for proteasomal degradation with RCOR1 likely to be the primary target while degradation of KDM1A and HDAC2 is likely due to their association with RCOR1. It also targets RCOR3, MIER2 and MIER3 for proteasomal degradation as well as associated proteins ZNF217 and RREB1 with degradation being dependent on the presence of an ELM2 domain in the target proteins. The BCR(ARMC5) complex mediates premature transcription termination of transcripts that are unfavorably configured for transcriptional elongation by mediating ubiquitination of Pol II subunit POLR2A. Required for 'Lys-63'-linked ubiquitination of large ribosomal subunit protein MRPL12. The polypeptide is Cullin-3 (Cul3) (Mus musculus (Mouse)).